The following is a 597-amino-acid chain: Elongation factor 4 (597 aa).

The region spanning 2–184 (KHIRNFSIIA…NIVTAIPPPE (183 aa)) is the tr-type G domain. GTP is bound by residues 14–19 (DHGKST) and 131–134 (NKID).

The protein belongs to the TRAFAC class translation factor GTPase superfamily. Classic translation factor GTPase family. LepA subfamily.

The protein localises to the cell inner membrane. It catalyses the reaction GTP + H2O = GDP + phosphate + H(+). Required for accurate and efficient protein synthesis under certain stress conditions. May act as a fidelity factor of the translation reaction, by catalyzing a one-codon backward translocation of tRNAs on improperly translocated ribosomes. Back-translocation proceeds from a post-translocation (POST) complex to a pre-translocation (PRE) complex, thus giving elongation factor G a second chance to translocate the tRNAs correctly. Binds to ribosomes in a GTP-dependent manner. The chain is Elongation factor 4 from Vibrio atlanticus (strain LGP32) (Vibrio splendidus (strain Mel32)).